Here is a 284-residue protein sequence, read N- to C-terminus: Small ribosomal subunit protein uS2 (284 aa).

Residues 250–272 are compositionally biased toward low complexity; that stretch reads QELLAGATASPTAAGAAPGTPEA. Positions 250-284 are disordered; it reads QELLAGATASPTAAGAAPGTPEADIQTEPTAPQNP.

The protein belongs to the universal ribosomal protein uS2 family.

This Mycobacterium sp. (strain KMS) protein is Small ribosomal subunit protein uS2.